A 341-amino-acid chain; its full sequence is HTH-type transcriptional repressor PurR (341 aa).

The region spanning 2-56 (ATIKDVAKRANVSTTTVSHVINKTRFVAEETRNAVWAAIKELHYSPSAVARSLKV) is the HTH lacI-type domain. Residues 4–23 (IKDVAKRANVSTTTVSHVIN) constitute a DNA-binding region (H-T-H motif). Residues 48 to 56 (SAVARSLKV) mediate DNA binding. Residues Y73, R190, T192, F221, and D275 each contribute to the hypoxanthine site.

In terms of assembly, homodimer.

It participates in purine metabolism; purine nucleotide biosynthesis [regulation]. Its function is as follows. Is the main repressor of the genes involved in the de novo synthesis of purine nucleotides, regulating purB, purC, purEK, purF, purHD, purL, purMN and guaBA expression. PurR is allosterically activated to bind its cognate DNA by binding the purine corepressors, hypoxanthine or guanine, thereby effecting transcription repression. In Salmonella arizonae (strain ATCC BAA-731 / CDC346-86 / RSK2980), this protein is HTH-type transcriptional repressor PurR.